Here is a 756-residue protein sequence, read N- to C-terminus: Zinc finger and BTB domain-containing protein 49 (756 aa).

Positions 25–91 constitute a BTB domain; sequence CDCMLVVRGV…MYTSRLDLNQ (67 aa). Disordered stretches follow at residues 176-197, 226-290, and 311-379; these read APSANFSRPTEVSKPDAAGGSC, PSQV…LSEP, and SQQS…PSQA. The span at 226–242 shows a compositional bias: polar residues; the sequence is PSQVPATQQPLTRSAST. Basic and acidic residues-rich tracts occupy residues 319–341 and 348–365; these read SHPEPDNGLARREESAAKEDAVE and AEEKGRGELGPESSREEE. C2H2-type zinc fingers lie at residues 386 to 408, 414 to 436, 442 to 464, 470 to 492, 498 to 520, 526 to 548, and 554 to 576; these read YACELCGKPFKHPSNLELHKRSH, FECNICGKHFSQAGNLQTHLRRH, YICEICGKRFAASGDVQRHIIIH, HLCDTCGRGFSNFSNLKEHKKTH, FTCDECGKSFNMQRKLVKHRVRH, YSCPACGKCFGGSGDLRRHVRTH, and YSCEVCSKCFTRSAVLRRHKRMH.

This sequence belongs to the krueppel C2H2-type zinc-finger protein family. Interacts with EP300, KAT5/Tip60 and ZBTB17. The interaction with EP300 is direct and leads to synergistic induction of CDKN1A. On the CDKN1A promoter, forms a complex with ZBTB17; this interaction leads to additive CDKN1A transactivation. The interaction with ZBTB17 may block ZBTB17 repressor activity. In terms of tissue distribution, widely expressed, with highest levels in white adipose tissue and kidney, intermediate levels in brain, liver and heart, and lowest levels in spleen, brown adipose tissue and muscle.

It localises to the cytoplasm. It is found in the nucleus. Functionally, transcription factor. Inhibits cell proliferation by activating either CDKN1A/p21 transcription or RB1 transcription. This is Zinc finger and BTB domain-containing protein 49 (Zbtb49) from Mus musculus (Mouse).